The following is a 437-amino-acid chain: Argininosuccinate lyase (437 aa).

The protein belongs to the lyase 1 family. Argininosuccinate lyase subfamily.

Its subcellular location is the cytoplasm. The enzyme catalyses 2-(N(omega)-L-arginino)succinate = fumarate + L-arginine. The protein operates within amino-acid biosynthesis; L-arginine biosynthesis; L-arginine from L-ornithine and carbamoyl phosphate: step 3/3. This Clostridium novyi (strain NT) protein is Argininosuccinate lyase.